Here is a 295-residue protein sequence, read N- to C-terminus: MELIQDISRPPLEYVKGVPLIKYFAEALGPLQSFQARPDDLLISTYPKSGTTWVSQILDMIYQGGDLEKCHRAPIFMRVPFLEFKVPGIPSGMETLKNTPAPRLLKTHLPLALLPQTLLDQKVKVVYVARNAKDVAVSYYHFYHMAKVYPHPGTWESFLEKFMAGEVSYGSWYQHVQEWWELSRTHPVLYLFYEDMKENPKREIQKILEFVGRSLPEETVDLMVEHTSFKEMKKNPMTNYTTVRREFMDHSISPFMRKGMAGDWKTTFTVAQNERFDADYAKKMAGCSLSFRSEL.

48 to 53 (KSGTTW) contacts 3'-phosphoadenylyl sulfate. Substrate is bound at residue 106–108 (KTH). His108 functions as the Proton acceptor in the catalytic mechanism. 3'-phosphoadenylyl sulfate-binding positions include Arg130, Ser138, Tyr193, 227-232 (TSFKEM), and 255-259 (FMRKG).

It belongs to the sulfotransferase 1 family. As to quaternary structure, homodimer.

The protein localises to the cytoplasm. It catalyses the reaction a phenol + 3'-phosphoadenylyl sulfate = an aryl sulfate + adenosine 3',5'-bisphosphate + H(+). Sulfotransferase that utilizes 3'-phospho-5'-adenylyl sulfate (PAPS) as sulfonate donor to catalyze the sulfate conjugation of catecholamines, phenolic drugs and neurotransmitters. Is also responsible for the sulfonation and activation of minoxidil. Mediates the metabolic activation of carcinogenic N-hydroxyarylamines to DNA binding products and could so participate as modulating factor of cancer risk. This chain is Sulfotransferase 1A2 (SULT1A2), found in Homo sapiens (Human).